Reading from the N-terminus, the 432-residue chain is MGKSVVILGAQWGDEGKGKIVDLLTDRVKYVVRYQGGHNAGHTLIINGEKTVLRLIPSGMLHPNVTCLIGNGVVVSPEALMKEMGELESRGIKVRERLLISEACPLILPYHVAMDHAREAALGKKAIGTTGRGIGPAYEDKVARRGLRVGDLFNKEAFAEKLKNILEYYNFQLVNYYKVEPVDYQKTLDDVMAIADVITGMVADITTILDTARKNGEHILFEGAQGTMLDIDHGTYPYVTSSNTTAGGVATGSGFGPRNLDYVLGIIKAYCTRVGGGPFTTELFDDVGAEIARKGNEFGAVTGRPRRCGWFDAVAIRRAIQLNSISGFCMTKLDVLDGFDEVKICVAYKMPNGEIVEYAPLAAKDWEGVEPIYETLPGWKENTFRITDVNKLPQNCINYIKRIEEVTGVPIDILSTGPDRVETMILREPFAA.

GTP is bound by residues G13–K19 and G41–T43. D14 (proton acceptor) is an active-site residue. Residues D14 and G41 each coordinate Mg(2+). IMP is bound by residues D14–K17, N39–H42, T130, R144, Q225, T240, and R304. Catalysis depends on H42, which acts as the Proton donor. Residue A300–R306 participates in substrate binding. GTP contacts are provided by residues R306, K332–D334, and S415–G417.

This sequence belongs to the adenylosuccinate synthetase family. In terms of assembly, homodimer. Mg(2+) is required as a cofactor.

The protein localises to the cytoplasm. It catalyses the reaction IMP + L-aspartate + GTP = N(6)-(1,2-dicarboxyethyl)-AMP + GDP + phosphate + 2 H(+). It functions in the pathway purine metabolism; AMP biosynthesis via de novo pathway; AMP from IMP: step 1/2. Plays an important role in the de novo pathway of purine nucleotide biosynthesis. Catalyzes the first committed step in the biosynthesis of AMP from IMP. The polypeptide is Adenylosuccinate synthetase (Haemophilus influenzae (strain ATCC 51907 / DSM 11121 / KW20 / Rd)).